The primary structure comprises 642 residues: MSTVTVTLPDGTPLEVERGSTVEDVAYEIGPGLGDDTVAGVVDGELVDKHAPLTADVELEIVTESSDEYLDVLRHSAAHVFAQALQRLYSDAKLTIGPWTDNGFYYDITGVDIDEDDLEAIEAEAEEIIEEDLDIERELVDRDDAFERYEDNQFKQDILETEAADDEEVSFYTQGEFEDLCQGPHVESTGEIGGFALLEISAAFWRGEEENETLTRVYGTAFPTEDALDEFLEQRRKAEERDHRKIGQEMDLFSIDETTGPGLPLYEPNGKKILNELSDYVAGLNRDAGYDEVETPHVFRTELWKKSGHYENYVDDMFLLDVNDEEYGLKPMNCPGHATIFEQNSWSYRDLPVRYFEDGKVYRKEQRGELSGLSRTWAFTIDDGHLFVRPDQIEEEVLATVDIILDTLDTFNLDYTVQFATRPEKSVGGDEIWEKAESQLESVLEEQDIDYVVEEGDGAFYGPKIDFAFEDALGRHWDGPTVQLDFNMPERFDLSYTGEDNEEHRPVMIHRALYGSYERFFMVLTEHYNGKFPPWLAPEQIRLLPVSDDNITYCEEIQDELDDFRVTIEDRSWTVGKKIQQAHDDRVPYMCVIGDNEEEAGTISVRDRKEREEKDIDIAEFRDHLETEVEQQRTAVTFLAGR.

Positions 1–63 constitute a TGS domain; it reads MSTVTVTLPD…TADVELEIVT (63 aa). Positions 242–533 are catalytic; sequence DHRKIGQEMD…LTEHYNGKFP (292 aa). Residues C334, H385, and H510 each contribute to the Zn(2+) site.

The protein belongs to the class-II aminoacyl-tRNA synthetase family. Homodimer. Zn(2+) is required as a cofactor.

It is found in the cytoplasm. The enzyme catalyses tRNA(Thr) + L-threonine + ATP = L-threonyl-tRNA(Thr) + AMP + diphosphate + H(+). Its function is as follows. Catalyzes the attachment of threonine to tRNA(Thr) in a two-step reaction: L-threonine is first activated by ATP to form Thr-AMP and then transferred to the acceptor end of tRNA(Thr). This Haloarcula marismortui (strain ATCC 43049 / DSM 3752 / JCM 8966 / VKM B-1809) (Halobacterium marismortui) protein is Threonine--tRNA ligase.